The chain runs to 142 residues: MLKKDKSELTDIEYIVTQENGTEPPFMNEYWNHFDKGVYVDKISGKPLFTSEEKFHSECGWPSFSKALDDDEIIELVDKSFGMLRTEVRSEESNSHLGHVFNDGPKESGGLRYCINSAAIQFIPYEKLEELGYGDLISHFDK.

In terms of domain architecture, MsrB spans 2 to 125 (LKKDKSELTD…NSAAIQFIPY (124 aa)). The active-site Nucleophile is the cysteine 114.

This sequence belongs to the MsrB Met sulfoxide reductase family.

It catalyses the reaction L-methionyl-[protein] + [thioredoxin]-disulfide + H2O = L-methionyl-(R)-S-oxide-[protein] + [thioredoxin]-dithiol. In Staphylococcus aureus (strain bovine RF122 / ET3-1), this protein is Peptide methionine sulfoxide reductase MsrB.